The chain runs to 509 residues: tRNA-2-methylthio-N(6)-dimethylallyladenosine synthase (509 aa).

The segment at 1–20 (MNEKQKQESGQVNPADKTSE) is disordered. The region spanning 66–184 (RKFYIRTYGC…LPELLSEAYL (119 aa)) is the MTTase N-terminal domain. Cys-75, Cys-111, Cys-145, Cys-221, Cys-225, and Cys-228 together coordinate [4Fe-4S] cluster. Residues 207–437 (RNGKIKGWVN…NDLVKEISAK (231 aa)) form the Radical SAM core domain. The TRAM domain occupies 440–503 (KEYEGRTVEV…TWSLDGVMAG (64 aa)).

The protein belongs to the methylthiotransferase family. MiaB subfamily. As to quaternary structure, monomer. [4Fe-4S] cluster is required as a cofactor.

It localises to the cytoplasm. The catalysed reaction is N(6)-dimethylallyladenosine(37) in tRNA + (sulfur carrier)-SH + AH2 + 2 S-adenosyl-L-methionine = 2-methylsulfanyl-N(6)-dimethylallyladenosine(37) in tRNA + (sulfur carrier)-H + 5'-deoxyadenosine + L-methionine + A + S-adenosyl-L-homocysteine + 2 H(+). Catalyzes the methylthiolation of N6-(dimethylallyl)adenosine (i(6)A), leading to the formation of 2-methylthio-N6-(dimethylallyl)adenosine (ms(2)i(6)A) at position 37 in tRNAs that read codons beginning with uridine. The chain is tRNA-2-methylthio-N(6)-dimethylallyladenosine synthase from Bacillus velezensis (strain DSM 23117 / BGSC 10A6 / LMG 26770 / FZB42) (Bacillus amyloliquefaciens subsp. plantarum).